We begin with the raw amino-acid sequence, 249 residues long: MRILISNDDGVTAPGIAALHAALADHAECVVIAPDQDKSGAGSSLTLDRPLHPQTLANGFISLNGTPTDCVHLGLNGLLEHTPDMVVSGINLGANLGDDVLYSGTVAAALEGRFLGGTSLAFSLLSRLPDNLPTAAYIARRLVEAQSRLELPPRTVLNINIPNLPLEHIRGIQLTRLGHRARAAAPTKVVNPRGKEGYWIAVAGDAEDGGPGTDFHAVMQGYVSITPLQLDRTFNDAFERFDGWLEGVL.

4 residues coordinate a divalent metal cation: Asp8, Asp9, Ser39, and Asn91.

Belongs to the SurE nucleotidase family. A divalent metal cation serves as cofactor.

Its subcellular location is the cytoplasm. It carries out the reaction a ribonucleoside 5'-phosphate + H2O = a ribonucleoside + phosphate. Nucleotidase that shows phosphatase activity on nucleoside 5'-monophosphates. This chain is 5'-nucleotidase SurE, found in Pseudomonas entomophila (strain L48).